We begin with the raw amino-acid sequence, 139 residues long: Small ribosomal subunit protein bS6 (139 aa).

The tract at residues 120–139 (KGASKVETPTGPESTDIQEK) is disordered. Residues 130-139 (GPESTDIQEK) show a composition bias toward polar residues.

It belongs to the bacterial ribosomal protein bS6 family.

In terms of biological role, binds together with bS18 to 16S ribosomal RNA. This is Small ribosomal subunit protein bS6 (rpsF) from Borreliella burgdorferi (strain ATCC 35210 / DSM 4680 / CIP 102532 / B31) (Borrelia burgdorferi).